A 350-amino-acid polypeptide reads, in one-letter code: UDP-N-acetylenolpyruvoylglucosamine reductase (350 aa).

Positions 24 to 195 (HVDATARWLL…VAVEFNLPLL (172 aa)) constitute an FAD-binding PCMH-type domain. The active site involves Arg172. Ser245 (proton donor) is an active-site residue. The active site involves Glu342.

It belongs to the MurB family. FAD is required as a cofactor.

It is found in the cytoplasm. The enzyme catalyses UDP-N-acetyl-alpha-D-muramate + NADP(+) = UDP-N-acetyl-3-O-(1-carboxyvinyl)-alpha-D-glucosamine + NADPH + H(+). It functions in the pathway cell wall biogenesis; peptidoglycan biosynthesis. In terms of biological role, cell wall formation. The chain is UDP-N-acetylenolpyruvoylglucosamine reductase from Xanthomonas campestris pv. campestris (strain B100).